The chain runs to 940 residues: Testis-expressed protein 11 (940 aa).

This sequence belongs to the SPO22 family. In terms of assembly, interacts with SYCP2. Interacts with PBXIP1; may prevent interaction between PBXIP1 and ESR2. Interacts with SHOC1. Interacts with REDIC1. Testis-specific. Not expressed in adult ovaries.

It localises to the chromosome. Functionally, regulator of crossing-over during meiosis. Involved in initiation and/or maintenance of chromosome synapsis and formation of crossovers. The polypeptide is Testis-expressed protein 11 (TEX11) (Homo sapiens (Human)).